A 418-amino-acid chain; its full sequence is MRLLTRVLLVSLLTLSLVVSGLACGPGRGYGRRRHPKKLTPLAYKQFIPNVAEKTLGASGRYEGKITRNSERFKELTPNYNPDIIFKDEENTGADRLMTQRCKDKLNSLAISVMNHWPGVKLRVTEGWDEDGHHFEESLHYEGRAVDITTSDRDKSKYGTLSRLAVEAGFDWVYYESKAHIHCSVKAENSVAAKSGGCFPGSALVSLQDGGQKAVKDLNPGDKVLAADSAGNLVFSDFIMFTDRDSTTRRVFYVIETQEPVEKITLTAAHLLFVLDNSTEDLHTMTAAYASSVRAGQKVMVVDDSGQLKSVIVQRIYTEEQRGSFAPVTAHGTIVVDRILASCYAVIEDQGLAHLAFAPARLYYYVSSFLFPQNSSSRSNATLQQEGVHWYSRLLYQMGTWLLDSNMLHPLGMSVNSS.

Positions 1 to 23 (MRLLTRVLLVSLLTLSLVVSGLA) are cleaved as a signal peptide. Residue Cys24 is the site of N-palmitoyl cysteine attachment. The short motif at 32–38 (RRRHPKK) is the Cardin-Weintraub element. Ca(2+)-binding residues include Glu89, Glu90, Asp95, Thr125, Glu126, Asp129, and Asp131. 3 residues coordinate Zn(2+): His140, Asp147, and His182. Gly197 carries the Cholesterol glycine ester lipid modification.

This sequence belongs to the hedgehog family. Interacts with HHATL/GUP1 which negatively regulates HHAT-mediated palmitoylation of the SHH N-terminus. Interacts with BOC and CDON. Interacts with HHIP. Interacts with DISP1 via its cholesterol anchor. Interacts with SCUBE2. As to quaternary structure, multimer. Post-translationally, the C-terminal domain displays an autoproteolysis activity and a cholesterol transferase activity. Both activities result in the cleavage of the full-length protein and covalent attachment of a cholesterol moiety to the C-terminal of the newly generated N-terminal fragment (ShhN). Cholesterylation is required for the sonic hedgehog protein N-product targeting to lipid rafts and multimerization. ShhN is the active species in both local and long-range signaling, whereas the C-product (ShhC) is degraded in the reticulum endoplasmic. In terms of processing, N-palmitoylation by HHAT of ShhN is required for sonic hedgehog protein N-product multimerization and full activity. It is a prerequisite for the membrane-proximal positioning and the subsequent shedding of this N-terminal peptide. The lipidated N- and C-terminal peptides of ShhNp can be cleaved (shedding). The N-terminal palmitoylated peptide is cleaved at the Cardin-Weintraub (CW) motif site. The cleavage reduced the interactions with heparan sulfate. The cleavage is enhanced by SCUBE2. Expressed in the ventral midline of the neural tube and brain. Also found in the notochord and in developing fin bud. In the developing brain, expression occurs in domains that include a discrete region in the floor of the diencephalon.

The protein resides in the endoplasmic reticulum membrane. Its subcellular location is the golgi apparatus membrane. It localises to the cell membrane. The catalysed reaction is glycyl-L-cysteinyl-[protein] + cholesterol + H(+) = [protein]-C-terminal glycyl cholesterol ester + N-terminal L-cysteinyl-[protein]. Functionally, the C-terminal part of the sonic hedgehog protein precursor displays an autoproteolysis and a cholesterol transferase activity. Both activities result in the cleavage of the full-length protein into two parts (ShhN and ShhC) followed by the covalent attachment of a cholesterol moiety to the C-terminal of the newly generated ShhN. Both activities occur in the endoplasmic reticulum. Once cleaved, ShhC is degraded in the endoplasmic reticulum. Its function is as follows. The dually lipidated sonic hedgehog protein N-product (ShhNp) is a morphogen which is essential for a variety of patterning events during development. Involved in dorso-ventral patterning of the brain and in early patterning of the developing eyes. Binds to the patched (PTCH1) receptor, which functions in association with smoothened (SMO), to activate the transcription of target genes. In the absence of SHH, PTCH1 represses the constitutive signaling activity of SMO. This chain is Sonic hedgehog protein (shha), found in Danio rerio (Zebrafish).